The sequence spans 285 residues: Nucleotide-binding protein Glov_2163 (285 aa).

ATP is bound at residue 8-15 (GMSGSGKS). Residue 59-62 (DIRG) participates in GTP binding.

It belongs to the RapZ-like family.

In terms of biological role, displays ATPase and GTPase activities. This chain is Nucleotide-binding protein Glov_2163, found in Trichlorobacter lovleyi (strain ATCC BAA-1151 / DSM 17278 / SZ) (Geobacter lovleyi).